The following is a 91-amino-acid chain: Potassium channel toxin TstKMK (91 aa).

Positions 1-25 are cleaved as a signal peptide; it reads MVATNRCCVFALLFALLLVHSLTEA. Positions 26–42 are excised as a propeptide; it reads GKGKEILGKIKEKIIEA. One can recognise a BetaSPN-type CS-alpha/beta domain in the interval 58 to 91; sequence EYACPAIDKFCEDHCAAKKAVGKCDDFKCKCIKL. 3 cysteine pairs are disulfide-bonded: cysteine 61-cysteine 81, cysteine 68-cysteine 86, and cysteine 72-cysteine 88.

This sequence belongs to the long chain scorpion toxin family. Class 2 subfamily. As to expression, expressed by the venom gland.

Its subcellular location is the secreted. Functionally, the full peptide presents antibacterial and cytotoxic activities. The synthetic C-terminus (AA 33-76) inhibits voltage-gated potassium channels Kv1.1/KCNA1, Kv1.2/KCNA2, and Kv1.3/KCNA3. The polypeptide is Potassium channel toxin TstKMK (Tityus stigmurus (Brazilian scorpion)).